The primary structure comprises 378 residues: Protein FAM185A (378 aa).

This is Protein FAM185A (Fam185a) from Mus musculus (Mouse).